Consider the following 539-residue polypeptide: Chaperonin GroEL (539 aa).

ATP-binding positions include 29 to 32 (TLGP), 86 to 90 (DGTTT), glycine 413, and aspartate 492.

It belongs to the chaperonin (HSP60) family. In terms of assembly, forms a cylinder of 14 subunits composed of two heptameric rings stacked back-to-back. Interacts with the co-chaperonin GroES.

The protein localises to the cytoplasm. It carries out the reaction ATP + H2O + a folded polypeptide = ADP + phosphate + an unfolded polypeptide.. In terms of biological role, together with its co-chaperonin GroES, plays an essential role in assisting protein folding. The GroEL-GroES system forms a nano-cage that allows encapsulation of the non-native substrate proteins and provides a physical environment optimized to promote and accelerate protein folding. The chain is Chaperonin GroEL from Fusobacterium nucleatum subsp. nucleatum (strain ATCC 25586 / DSM 15643 / BCRC 10681 / CIP 101130 / JCM 8532 / KCTC 2640 / LMG 13131 / VPI 4355).